A 242-amino-acid polypeptide reads, in one-letter code: 2-C-methyl-D-erythritol 4-phosphate cytidylyltransferase (242 aa).

Belongs to the IspD/TarI cytidylyltransferase family. IspD subfamily.

The enzyme catalyses 2-C-methyl-D-erythritol 4-phosphate + CTP + H(+) = 4-CDP-2-C-methyl-D-erythritol + diphosphate. It participates in isoprenoid biosynthesis; isopentenyl diphosphate biosynthesis via DXP pathway; isopentenyl diphosphate from 1-deoxy-D-xylulose 5-phosphate: step 2/6. In terms of biological role, catalyzes the formation of 4-diphosphocytidyl-2-C-methyl-D-erythritol from CTP and 2-C-methyl-D-erythritol 4-phosphate (MEP). The protein is 2-C-methyl-D-erythritol 4-phosphate cytidylyltransferase of Shewanella loihica (strain ATCC BAA-1088 / PV-4).